Reading from the N-terminus, the 229-residue chain is Zinc finger matrin-type protein 4 (229 aa).

Matrin-type zinc fingers lie at residues Ser14–Leu44, Asp72–Leu106, Arg145–Arg175, and Tyr198–Asn228.

It is found in the nucleus. This Mus musculus (Mouse) protein is Zinc finger matrin-type protein 4 (Zmat4).